The following is a 661-amino-acid chain: Ecdysteroid-phosphate phosphatase (661 aa).

Residues K16–H57 enclose the UBA domain. The 66-residue stretch at A235 to E300 folds into the SH3 domain. Residue R409 is part of the active site. The active-site Tele-phosphohistidine intermediate is H410. H590 is a catalytic residue.

Homodimer. In terms of tissue distribution, detected in non-diapause eggs, with highest expression between 2 and 5 days after oviposition. Not detected in other tissues tested.

It localises to the cytoplasm. Its subcellular location is the cytosol. It carries out the reaction ecdysone 22-phosphate + H2O = ecdysone + phosphate. The enzyme catalyses 20-hydroxyecdysone 22-phosphate + H2O = 20-hydroxyecdysone + phosphate. It catalyses the reaction 2-deoxyecdysone 22-phosphate + H2O = 2-deoxyecdysone + phosphate. The catalysed reaction is O-phospho-L-tyrosyl-[protein] + H2O = L-tyrosyl-[protein] + phosphate. Its activity is regulated as follows. Competitively inhibited by 4-nitrophenyl phosphate (para-nitrophenylphosphate, pNPP). Also inhibited by tungstate, vanadate, and phosphate. In terms of biological role, steroid phosphatase which catalyzes the conversion of inactive phosphorylated ecdysteroids into their active forms. Shows high activity towards ecdysone 22-phosphate (E22P). Has lower activity towards other ecdysteriod phosphates including 20-hydroxyecdysone 22-phosphate (20E22P) and 2-deoxyecdysone 22-phosphate (2dE22P). Also has protein tyrosine phosphatase activity. This is Ecdysteroid-phosphate phosphatase from Bombyx mori (Silk moth).